Consider the following 194-residue polypeptide: ATP-dependent Clp protease proteolytic subunit (194 aa).

Residue Ser-98 is the Nucleophile of the active site. Residue His-123 is part of the active site.

The protein belongs to the peptidase S14 family. As to quaternary structure, fourteen ClpP subunits assemble into 2 heptameric rings which stack back to back to give a disk-like structure with a central cavity, resembling the structure of eukaryotic proteasomes.

It is found in the cytoplasm. It catalyses the reaction Hydrolysis of proteins to small peptides in the presence of ATP and magnesium. alpha-casein is the usual test substrate. In the absence of ATP, only oligopeptides shorter than five residues are hydrolyzed (such as succinyl-Leu-Tyr-|-NHMec, and Leu-Tyr-Leu-|-Tyr-Trp, in which cleavage of the -Tyr-|-Leu- and -Tyr-|-Trp bonds also occurs).. Cleaves peptides in various proteins in a process that requires ATP hydrolysis. Has a chymotrypsin-like activity. Plays a major role in the degradation of misfolded proteins. This chain is ATP-dependent Clp protease proteolytic subunit, found in Sodalis glossinidius (strain morsitans).